Consider the following 613-residue polypeptide: Na(+)/H(+) antiporter NhaA 1 (613 aa).

Residues methionine 1–arginine 24 form a disordered region. A na(+)/H(+) antiporter NhaA region spans residues methionine 1 to valine 408. The next 11 helical transmembrane spans lie at alanine 29–tryptophan 49, glycine 81–glycine 101, alanine 110–phenylalanine 130, glutamine 138–isoleucine 158, isoleucine 168–phenylalanine 188, aspartate 191–valine 211, isoleucine 231–isoleucine 251, alanine 300–valine 320, tryptophan 337–leucine 357, glycine 377–isoleucine 397, and valine 408–threonine 428. In terms of domain architecture, Thioredoxin spans glycine 409 to arginine 613.

The protein in the N-terminal section; belongs to the NhaA Na(+)/H(+) (TC 2.A.33) antiporter family.

It is found in the cell membrane. The enzyme catalyses Na(+)(in) + 2 H(+)(out) = Na(+)(out) + 2 H(+)(in). Na(+)/H(+) antiporter that extrudes sodium in exchange for external protons. This chain is Na(+)/H(+) antiporter NhaA 1, found in Mycobacterium sp. (strain JLS).